A 375-amino-acid polypeptide reads, in one-letter code: Platelet-derived growth factor receptor-like protein (375 aa).

Residues 1 to 21 form the signal peptide; it reads MKVWLLLGLLLVHEALEDVTG. Positions 22-64 are disordered; the sequence is QHLPKNKRPKEPGENRIKPTNKKVKPKIPKMKDRDSANSAPKT. Residues 40 to 50 are compositionally biased toward basic residues; the sequence is PTNKKVKPKIP. The Ig-like C2-type 1 domain occupies 62–159; the sequence is PKTQSIMMQV…GYICRKDEAK (98 aa). Cys96 and Cys143 are disulfide-bonded. Residues Asn132 and Asn219 are each glycosylated (N-linked (GlcNAc...) asparagine). The 104-residue stretch at 272-375 folds into the Ig-like C2-type 2 domain; the sequence is PSTTILASSN…TTVATTVEFS (104 aa). Residues Cys293 and Cys357 are joined by a disulfide bond.

Forms a complex composed of PDGFRL, TNK2 and GRB2. In terms of tissue distribution, expressed in colon, lung and liver.

Its subcellular location is the secreted. The sequence is that of Platelet-derived growth factor receptor-like protein (PDGFRL) from Homo sapiens (Human).